The sequence spans 154 residues: 6,7-dimethyl-8-ribityllumazine synthase (154 aa).

Residues W22, 56–58 (AWE), and 80–82 (CVI) contribute to the 5-amino-6-(D-ribitylamino)uracil site. Residue 85–86 (DT) coordinates (2S)-2-hydroxy-3-oxobutyl phosphate. Residue H88 is the Proton donor of the active site. A 5-amino-6-(D-ribitylamino)uracil-binding site is contributed by N113. R127 contacts (2S)-2-hydroxy-3-oxobutyl phosphate.

It belongs to the DMRL synthase family. Forms an icosahedral capsid composed of 60 subunits, arranged as a dodecamer of pentamers.

The catalysed reaction is (2S)-2-hydroxy-3-oxobutyl phosphate + 5-amino-6-(D-ribitylamino)uracil = 6,7-dimethyl-8-(1-D-ribityl)lumazine + phosphate + 2 H2O + H(+). Its pathway is cofactor biosynthesis; riboflavin biosynthesis; riboflavin from 2-hydroxy-3-oxobutyl phosphate and 5-amino-6-(D-ribitylamino)uracil: step 1/2. In terms of biological role, catalyzes the formation of 6,7-dimethyl-8-ribityllumazine by condensation of 5-amino-6-(D-ribitylamino)uracil with 3,4-dihydroxy-2-butanone 4-phosphate. This is the penultimate step in the biosynthesis of riboflavin. This is 6,7-dimethyl-8-ribityllumazine synthase from Xanthomonas campestris pv. campestris (strain 8004).